A 353-amino-acid chain; its full sequence is Inactive ubiquitin thioesterase OTULINL (353 aa).

Residues 1–80 form a required for membrane binding region; that stretch reads MEAPRSAPRE…KWWIGYLQRK (80 aa). In terms of domain architecture, OTU spans 125–353; it reads KCVRAVKRDN…NGHHYHIPVF (229 aa).

Belongs to the peptidase C65 family. Otulin subfamily. As to quaternary structure, does not bind ubiquitin or ubiquitin-like proteins.

It localises to the cytoplasm. The protein localises to the endoplasmic reticulum membrane. It is found in the nucleus envelope. In terms of biological role, lacks deubiquitinase activity. The protein is Inactive ubiquitin thioesterase OTULINL of Mus musculus (Mouse).